A 55-amino-acid polypeptide reads, in one-letter code: Large ribosomal subunit protein bL32 (55 aa).

Positions 1-27 (MAVQQNKPTRSKRGMRRSHDALTTATL) are disordered.

This sequence belongs to the bacterial ribosomal protein bL32 family.

This is Large ribosomal subunit protein bL32 from Yersinia enterocolitica serotype O:8 / biotype 1B (strain NCTC 13174 / 8081).